Here is a 164-residue protein sequence, read N- to C-terminus: Interferon gamma (164 aa).

The signal sequence occupies residues 1–19 (MTCQTYNLFVLSVIMIYYG). Residues N42 and N61 are each glycosylated (N-linked (GlcNAc...) asparagine).

It belongs to the type II (or gamma) interferon family. In terms of assembly, homodimer.

It is found in the secreted. In terms of biological role, produced by lymphocytes activated by specific antigens or mitogens. IFN-gamma, in addition to having antiviral activity, has important immunoregulatory functions. It is a potent activator of macrophages, it has antiproliferative effects on transformed cells and it can potentiate the antiviral and antitumor effects of the type I interferons. The protein is Interferon gamma (IFNG) of Coturnix japonica (Japanese quail).